The following is a 134-amino-acid chain: ATP synthase epsilon chain (134 aa).

The span at A94–H104 shows a compositional bias: basic and acidic residues. Residues A94–N115 are disordered.

The protein belongs to the ATPase epsilon chain family. F-type ATPases have 2 components, CF(1) - the catalytic core - and CF(0) - the membrane proton channel. CF(1) has five subunits: alpha(3), beta(3), gamma(1), delta(1), epsilon(1). CF(0) has three main subunits: a, b and c.

Its subcellular location is the cell membrane. Produces ATP from ADP in the presence of a proton gradient across the membrane. This chain is ATP synthase epsilon chain, found in Staphylococcus epidermidis (strain ATCC 12228 / FDA PCI 1200).